A 485-amino-acid chain; its full sequence is Calcium/manganese antiporter SLC30A10 (485 aa).

Topologically, residues 1–10 are cytoplasmic; sequence MGRYSGKTCR. The chain crosses the membrane as a helical span at residues 11 to 31; it reads LLFMLVLTVAFFVAELVSGYL. Residues 32 to 40 lie on the Extracellular side of the membrane; sequence GNSIALLSD. The helical transmembrane segment at 41-61 threads the bilayer; that stretch reads SFNMLSDLISLCVGLSAGYIA. The Cytoplasmic segment spans residues 62-81; that stretch reads RRPTRGFSATYGYARAEVVG. The helical transmembrane segment at 82–102 threads the bilayer; sequence ALSNAVFLTALCFTIFVEAVL. Residues 103–113 are Extracellular-facing; it reads RLARPERIDDP. Residues 114 to 134 form a helical membrane-spanning segment; sequence ELVLIVGVLGLLVNVVGLLIF. Over 135–244 the chain is Cytoplasmic; the sequence is QDCAAWFACC…ALNIRGVLLH (110 aa). Residues 167 to 196 form a disordered region; the sequence is FGGPQGAEDPRRAADPTAPGSDSAVTLRGT. The chain crosses the membrane as a helical span at residues 245-265; the sequence is VMGDALGSVVVVITAIIFYVL. Over 266–278 the chain is Extracellular; it reads PLKSEDPCNWQCY. Residues 279–299 traverse the membrane as a helical segment; that stretch reads IDPSLTVLMVIIILSSAFPLI. Over 300–485 the chain is Cytoplasmic; sequence KETAAILLQM…DQCYVNRTHF (186 aa). Residues 308 to 485 are required for plasma membrane localization; sequence QMVPKGVNME…DQCYVNRTHF (178 aa).

Belongs to the cation diffusion facilitator (CDF) transporter (TC 2.A.4) family. SLC30A subfamily. In terms of assembly, forms homodimers. Forms heterodimers and high-molecular weight oligomers with SLC30A3, SLC30A2 and SLC30A4; heterodimerization is mediated by covalent-bound tyrosine residues, occurs probably in a tissue-specific manner and could mediate the intracellular zinc transport activity into early endosomes and recycling endosomes. In terms of tissue distribution, specifically expressed in fetal liver and fetal brain. Expressed in adult tissues with relative levels small intestine &gt; liver &gt; testes &gt; brain &gt; ovary &gt; colon &gt; cervix &gt; prostate &gt; placenta. Expressed in liver and neurons of the nervous system (at protein level).

It is found in the cell membrane. Its subcellular location is the golgi apparatus membrane. The protein localises to the recycling endosome membrane. It localises to the early endosome membrane. The enzyme catalyses Mn(2+)(out) + Ca(2+)(in) = Mn(2+)(in) + Ca(2+)(out). It catalyses the reaction Zn(2+)(in) = Zn(2+)(out). Its function is as follows. Calcium:manganese antiporter of the plasma membrane mediating the efflux of intracellular manganese coupled to an active extracellular calcium exchange. Required for intracellular manganese homeostasis, an essential cation for the function of several enzymes, including some crucially important for the metabolism of neurotransmitters and other neuronal metabolic pathways. Manganese can also be cytotoxic and induce oxidative stress, mitochondrial dysfunction and apoptosis. Could also have an intracellular zinc ion transporter activity, directly regulating intracellular zinc ion homeostasis and more indirectly various signaling pathway and biological processes. This is Calcium/manganese antiporter SLC30A10 from Homo sapiens (Human).